A 327-amino-acid polypeptide reads, in one-letter code: Phenylalanine--tRNA ligase alpha subunit (327 aa).

Residue Glu-252 participates in Mg(2+) binding.

The protein belongs to the class-II aminoacyl-tRNA synthetase family. Phe-tRNA synthetase alpha subunit type 1 subfamily. In terms of assembly, tetramer of two alpha and two beta subunits. Requires Mg(2+) as cofactor.

Its subcellular location is the cytoplasm. It carries out the reaction tRNA(Phe) + L-phenylalanine + ATP = L-phenylalanyl-tRNA(Phe) + AMP + diphosphate + H(+). This chain is Phenylalanine--tRNA ligase alpha subunit, found in Yersinia pseudotuberculosis serotype O:1b (strain IP 31758).